Reading from the N-terminus, the 352-residue chain is UDP-3-O-acylglucosamine N-acyltransferase (352 aa).

Residue histidine 257 is the Proton acceptor of the active site.

This sequence belongs to the transferase hexapeptide repeat family. LpxD subfamily. Homotrimer.

The catalysed reaction is a UDP-3-O-[(3R)-3-hydroxyacyl]-alpha-D-glucosamine + a (3R)-hydroxyacyl-[ACP] = a UDP-2-N,3-O-bis[(3R)-3-hydroxyacyl]-alpha-D-glucosamine + holo-[ACP] + H(+). Its pathway is bacterial outer membrane biogenesis; LPS lipid A biosynthesis. Functionally, catalyzes the N-acylation of UDP-3-O-acylglucosamine using 3-hydroxyacyl-ACP as the acyl donor. Is involved in the biosynthesis of lipid A, a phosphorylated glycolipid that anchors the lipopolysaccharide to the outer membrane of the cell. This chain is UDP-3-O-acylglucosamine N-acyltransferase, found in Methylobacterium sp. (strain 4-46).